A 234-amino-acid polypeptide reads, in one-letter code: NAD-dependent protein deacylase (234 aa).

Positions 1–234 (MTKQVRIVVL…LVPHYLAQFL (234 aa)) constitute a Deacetylase sirtuin-type domain. An NAD(+)-binding site is contributed by 12 to 31 (GAGISAESGIRTFRATDGLW). Tyr-56 and Arg-59 together coordinate substrate. 93–96 (QNVD) is a binding site for NAD(+). His-111 acts as the Proton acceptor in catalysis. Zn(2+) contacts are provided by Cys-119 and Cys-138. NAD(+) is bound by residues 178-180 (GTS), 204-206 (NLE), and Ala-222.

It belongs to the sirtuin family. Class III subfamily. Zn(2+) is required as a cofactor.

It localises to the cytoplasm. The enzyme catalyses N(6)-acetyl-L-lysyl-[protein] + NAD(+) + H2O = 2''-O-acetyl-ADP-D-ribose + nicotinamide + L-lysyl-[protein]. The catalysed reaction is N(6)-succinyl-L-lysyl-[protein] + NAD(+) + H2O = 2''-O-succinyl-ADP-D-ribose + nicotinamide + L-lysyl-[protein]. NAD-dependent lysine deacetylase and desuccinylase that specifically removes acetyl and succinyl groups on target proteins. Modulates the activities of several proteins which are inactive in their acylated form. The protein is NAD-dependent protein deacylase of Pasteurella multocida (strain Pm70).